The sequence spans 626 residues: MSDAQDSRVGSMFGPYHLKRLLGRGGMGEVYEAEHTVKEWTVAVKLMTAEFSKDPVFRERMKREARIAGRLQEPHVVPIHDYGEVDGQMFLEMRLVEGTDLDSVLKRFGPLTPPRAVAIITQIASALDAAHADGVMHRDVKPQNILITRDDFAYLVDFGIASATTDEKLTQLGTAVGTWKYMAPERFSNDEVTYRADIYALACVLHECLTGAPPYRADSAGTLVSSHLMGPIPQPSAIRPGIPKAFDAVVARGMAKKPEDRYASAGDLALAAHEALSDPDQDHAADILRRSQESTLPAPPKPVPPPTMPATAMAPRQPPAPPVTPPGVQPAPKPSYTPPAQPGPAGQRPGPTGQPSWAPNSGPMPASGPTPTPQYYQGGGWGAPPSGGPSPWAQTPRKTNPWPLVAGAAAVVLVLVLGAIGIWIAIRPKPVQPPQPVAEERLSALLLNSSEVNAVMGSSSMQPGKPITSMDSSPVTVSLPDCQGALYTSQDPVYAGTGYTAINGLISSEPGDNYEHWVNQAVVAFPTADKARAFVQTSADKWKNCAGKTVTVTNKAKTYRWTFADVKGSPPTITVIDTQEGAEGWECQRAMSVANNVVVDVNACGYQITNQAGQIAAKIVDKVNKE.

The Cytoplasmic portion of the chain corresponds to 1-403; it reads MSDAQDSRVG…QTPRKTNPWP (403 aa). The region spanning 16–276 is the Protein kinase domain; it reads YHLKRLLGRG…DLALAAHEAL (261 aa). ATP-binding positions include 22–30 and K45; that span reads LGRGGMGEV. The active-site Proton acceptor is the D139. T170 carries the phosphothreonine modification. A disordered region spans residues 292–396; it reads QESTLPAPPK…GGPSPWAQTP (105 aa). 2 stretches are compositionally biased toward pro residues: residues 297–308 and 316–342; these read PAPPKPVPPPTM and RQPPAPPVTPPGVQPAPKPSYTPPAQP. The span at 343–355 shows a compositional bias: low complexity; the sequence is GPAGQRPGPTGQP. Residues 404–424 traverse the membrane as a helical segment; it reads LVAGAAAVVLVLVLGAIGIWI. Over 425 to 626 the chain is Extracellular; that stretch reads AIRPKPVQPP…AKIVDKVNKE (202 aa). Intrachain disulfides connect C482-C545 and C587-C604.

The protein belongs to the protein kinase superfamily. Ser/Thr protein kinase family. A divalent metal cation serves as cofactor. Autophosphorylated on threonine and serine residues. Dephosphorylated by PstP.

It is found in the cell membrane. The enzyme catalyses L-seryl-[protein] + ATP = O-phospho-L-seryl-[protein] + ADP + H(+). It carries out the reaction L-threonyl-[protein] + ATP = O-phospho-L-threonyl-[protein] + ADP + H(+). Its function is as follows. May regulate bacterial growth in response to external signals to facilitate adaptation to the host environment. This Mycobacterium tuberculosis (strain CDC 1551 / Oshkosh) protein is Serine/threonine-protein kinase PknH (pknH).